The sequence spans 131 residues: uncharacterized protein (131 aa).

This is an uncharacterized protein from Orgyia pseudotsugata multicapsid polyhedrosis virus (OpMNPV).